The chain runs to 495 residues: Membrane-bound glycerophospholipid O-acyltransferase 1 (495 aa).

Helical transmembrane passes span 34 to 54, 70 to 90, 126 to 146, 180 to 200, 238 to 258, and 297 to 317; these read VNFV…RIYL, IFGI…LFVL, IYIF…MIVT, PSFL…AGPC, TGAV…FLTL, and YFAW…FSGV. Active-site residues include Asn350 and His381. 3 helical membrane passes run 371 to 391, 426 to 446, and 450 to 470; these read VLTF…YFTF, TWAV…MLAV, and ISLY…IILF. Ser488 bears the Phosphoserine mark.

The protein belongs to the membrane-bound acyltransferase family. As to expression, expressed in neutrophils.

It is found in the endoplasmic reticulum membrane. It catalyses the reaction a 1-acyl-sn-glycero-3-phospho-L-serine + an acyl-CoA = a 1,2-diacyl-sn-glycero-3-phospho-L-serine + CoA. The enzyme catalyses a 1-acyl-sn-glycero-3-phosphocholine + an acyl-CoA = a 1,2-diacyl-sn-glycero-3-phosphocholine + CoA. The catalysed reaction is a 1-acyl-sn-glycero-3-phosphoethanolamine + an acyl-CoA = a 1,2-diacyl-sn-glycero-3-phosphoethanolamine + CoA. It carries out the reaction 1-(9Z-octadecenoyl)-sn-glycero-3-phospho-L-serine + (9Z)-octadecenoyl-CoA = 1,2-di-(9Z)-octadecenoyl-sn-glycero-3-phospho-L-serine + CoA. It catalyses the reaction 1-(9Z-octadecenoyl)-sn-glycero-3-phospho-L-serine + octadecanoyl-CoA = 1-(9Z-octadecenoyl)-2-octadecanoyl-sn-glycero-3-phospho-L-serine + CoA. The enzyme catalyses 1-(9Z-octadecenoyl)-sn-glycero-3-phospho-L-serine + (9Z)-hexadecenoyl-CoA = 1-(9Z-octadecenoyl)-2-(9Z-hexadecenoyl)-sn-glycero-3-phospho-L-serine + CoA. The catalysed reaction is 1-(9Z-octadecenoyl)-sn-glycero-3-phospho-L-serine + (9Z,12Z)-octadecadienoyl-CoA = 1-(9Z-octadecenoyl)-2-(9Z,12Z-octadienoyl)-sn-glycero-3-phospho-L-serine + CoA. It carries out the reaction 1-hexadecanoyl-sn-glycero-3-phosphocholine + (9Z)-octadecenoyl-CoA = 1-hexadecanoyl-2-(9Z-octadecenoyl)-sn-glycero-3-phosphocholine + CoA. It catalyses the reaction a 1-O-(1Z-alkenyl)-sn-glycero-3-phosphoethanolamine + (9Z)-octadecenoyl-CoA = 1-O-(1Z)-alkenyl-2-(9Z)-octadecenoyl-sn-glycero-3-phosphoethanolamine + CoA. The enzyme catalyses 1-octadecanoyl-sn-glycero-3-phosphoethanolamine + (9Z)-octadecenoyl-CoA = 1-octadecanoyl-2-(9Z-octadecenoyl)-sn-glycero-3-phosphoethanolamine + CoA. The catalysed reaction is 1-(9Z-octadecenoyl)-sn-glycero-3-phosphoethanolamine + (9Z)-octadecenoyl-CoA = 1,2-di-(9Z-octadecenoyl)-sn-glycero-3-phosphoethanolamine + CoA. It carries out the reaction 1-hexadecanoyl-sn-glycero-3-phosphoethanolamine + (9Z)-octadecenoyl-CoA = 1-hexadecanoyl-2-(9Z-octadecenoyl)-sn-glycero-3-phosphoethanolamine + CoA. It catalyses the reaction 1-(10Z-heptadecenoyl)-sn-glycero-3-phosphoethanolamine + hexadecanoyl-CoA = 1-(10Z-heptadecenoyl)-2-hexadecanoyl-sn-glycero-3-phosphoethanolamine + CoA. The enzyme catalyses 1-(10Z-heptadecenoyl)-sn-glycero-3-phosphoethanolamine + (9Z)-octadecenoyl-CoA = 1-(10Z-heptadecenoyl)-2-(9Z-octadecenoyl)-sn-glycero-3-phosphoethanolamine + CoA. Its pathway is lipid metabolism; phospholipid metabolism. With respect to regulation, partially inhibited by thimerosal. In terms of biological role, acyltransferase which catalyzes the transfer of an acyl group from an acyl-CoA towards a lysophospholipid producing a phospholipid and participates in the reacylation step of the phospholipid remodeling pathway also known as the Lands cycle. Acts on lysophosphatidylserine (1-acyl-2-hydroxy-sn-glycero-3-phospho-L-serine or LPS) and lysophosphatidylethanolamine (1-acyl-sn-glycero-3-phosphoethanolamine or LPE), and to a lesser extend lysophosphatidylcholine. Prefers oleoyl-CoA as the acyl donor and 1-oleoyl-LPE as acceptor. May play a role in neurite outgrowth during neuronal differentiation. This chain is Membrane-bound glycerophospholipid O-acyltransferase 1, found in Homo sapiens (Human).